A 470-amino-acid polypeptide reads, in one-letter code: Ribulose bisphosphate carboxylase large chain (470 aa).

Asn-118 and Thr-168 together coordinate substrate. Catalysis depends on Lys-170, which acts as the Proton acceptor. Lys-172 serves as a coordination point for substrate. Mg(2+) contacts are provided by Lys-196, Asp-198, and Glu-199. Position 196 is an N6-carboxylysine (Lys-196). His-289 acts as the Proton acceptor in catalysis. The substrate site is built by Arg-290, His-322, and Ser-374.

The protein belongs to the RuBisCO large chain family. Type I subfamily. As to quaternary structure, heterohexadecamer of 8 large chains and 8 small chains; disulfide-linked. The disulfide link is formed within the large subunit homodimers. RuBisCO interacts with the C-terminus of CcmM, and can be found in complexes that also include carbonic anhydrase (ccaA). RuBisCO associates with both the internal and shell portion of carboxysomes. Requires Mg(2+) as cofactor. The disulfide bond which can form in the large chain dimeric partners within the hexadecamer appears to be associated with oxidative stress and protein turnover.

The protein resides in the carboxysome. The enzyme catalyses 2 (2R)-3-phosphoglycerate + 2 H(+) = D-ribulose 1,5-bisphosphate + CO2 + H2O. It catalyses the reaction D-ribulose 1,5-bisphosphate + O2 = 2-phosphoglycolate + (2R)-3-phosphoglycerate + 2 H(+). Functionally, ruBisCO catalyzes two reactions: the carboxylation of D-ribulose 1,5-bisphosphate, the primary event in carbon dioxide fixation, as well as the oxidative fragmentation of the pentose substrate in the photorespiration process. Both reactions occur simultaneously and in competition at the same active site. The polypeptide is Ribulose bisphosphate carboxylase large chain (Synechocystis sp. (strain ATCC 27184 / PCC 6803 / Kazusa)).